The primary structure comprises 505 residues: Maturase K (505 aa).

It belongs to the intron maturase 2 family. MatK subfamily.

Its subcellular location is the plastid. It is found in the chloroplast. Its function is as follows. Usually encoded in the trnK tRNA gene intron. Probably assists in splicing its own and other chloroplast group II introns. This chain is Maturase K, found in Coffea arabica (Arabian coffee).